The chain runs to 523 residues: Xanthotoxin 5-hydroxylase CYP82C2 (523 aa).

Residues 1–21 (MDTSLFSLFVPILVFVFIALF) traverse the membrane as a helical segment. Cys-462 lines the heme pocket.

It belongs to the cytochrome P450 family. Requires heme as cofactor.

The protein resides in the membrane. It catalyses the reaction xanthotoxin + reduced [NADPH--hemoprotein reductase] + O2 = 5-hydroxyxanthotoxin + oxidized [NADPH--hemoprotein reductase] + H2O + 2 H(+). The enzyme catalyses indole-3-carbonyl nitrile + reduced [NADPH--hemoprotein reductase] + O2 = 4-hydroxy-indole-3-carbonyl nitrile + oxidized [NADPH--hemoprotein reductase] + H2O + H(+). Its function is as follows. Involved in the biosynthetic pathway to 4-hydroxyindole-3-carbonyl nitrile (4-OH-ICN), a cyanogenic metabolite required for inducible pathogen defense. Converts indole-3-carbonyl nitrile (ICN) into 4-OH-ICN. Can hydroxylate xanthotoxin (8-methoxypsoralen) to form 5-hydroxyxanthotoxin (5-hydroxy-8-methoxypsoralen) in vivo and in vitro. The polypeptide is Xanthotoxin 5-hydroxylase CYP82C2 (Arabidopsis thaliana (Mouse-ear cress)).